A 156-amino-acid polypeptide reads, in one-letter code: Oxidized purine nucleoside triphosphate hydrolase (156 aa).

The region spanning 3 to 132 (ASRLYTLVLV…WFPLLLQKKK (130 aa)) is the Nudix hydrolase domain. Residue threonine 8 participates in 2-oxo-dATP binding. Residues threonine 8 and lysine 23 each coordinate 8-oxo-dGMP. 2 residues coordinate 8-oxo-dGTP: threonine 8 and lysine 23. Positions 8 and 23 each coordinate N(6)-methyl-AMP. O(6)-methyl-dGMP-binding residues include threonine 8 and lysine 23. Phenylalanine 27 contributes to the 8-oxo-ATP binding site. 2-oxo-dATP contacts are provided by residues asparagine 33 and 35-38 (FGGK). Position 33 (asparagine 33) interacts with 8-oxo-dGMP. 8-oxo-dGTP contacts are provided by residues asparagine 33 and 35–38 (FGGK). Asparagine 33 is an O(6)-methyl-dGMP binding site. Residues 35–38 (FGGK) and glutamate 52 each bind 8-oxo-ATP. 5 residues coordinate Mg(2+): glycine 36, glutamate 52, glutamate 55, glutamate 56, and glutamate 100. Positions 37–58 (GKVQEGETIEDGARRELQEESG) match the Nudix box motif. Residue glutamate 56 coordinates 8-oxo-ATP. Residue 117-120 (WPDD) coordinates 2-oxo-dATP. Residue 117 to 120 (WPDD) participates in 8-oxo-dGMP binding. 117 to 120 (WPDD) lines the 8-oxo-dGTP pocket. 117–120 (WPDD) provides a ligand contact to N(6)-methyl-AMP. 117-120 (WPDD) provides a ligand contact to O(6)-methyl-dGMP. 117-120 (WPDD) serves as a coordination point for 8-oxo-ATP.

It belongs to the Nudix hydrolase family. As to quaternary structure, monomer. Mg(2+) is required as a cofactor. The N-terminus is blocked. Widely expressed with highest expression in thymus, testis, embryo and proliferating blood lymphocytes.

The protein resides in the cytoplasm. The protein localises to the cytosol. Its subcellular location is the mitochondrion matrix. It is found in the nucleus. It carries out the reaction 2-oxo-dATP + H2O = 2-oxo-dAMP + diphosphate + H(+). The enzyme catalyses 2-oxo-ATP + H2O = 2-oxo-AMP + diphosphate + H(+). The catalysed reaction is 8-oxo-dGTP + H2O = 8-oxo-dGMP + diphosphate + H(+). It catalyses the reaction 8-oxo-dATP + H2O = 8-oxo-dAMP + diphosphate + H(+). It carries out the reaction O(6)-methyl-dGTP + H2O = O(6)-methyl-dGMP + diphosphate + H(+). The enzyme catalyses N(6)-methyl-dATP + H2O = N(6)-methyl-dAMP + diphosphate + H(+). The catalysed reaction is N(6)-methyl-ATP + H2O = N(6)-methyl-AMP + diphosphate + H(+). Inhibited by 2-oxo-dADP and 8-oxo-dGDP. Oxidized purine nucleoside triphosphate hydrolase which is a prominent sanitizer of the oxidized nucleotide pool. Catalyzes the hydrolysis of 2-oxo-dATP (2-hydroxy-dATP) into 2-oxo-dAMP. Also has a significant hydrolase activity toward 2-oxo-ATP, 8-oxo-dGTP and 8-oxo-dATP. Through the hydrolysis of oxidized purine nucleoside triphosphates, prevents their incorporation into DNA and the subsequent transversions A:T to C:G and G:C to T:A. Also catalyzes the hydrolysis of methylated purine nucleoside triphosphate preventing their integration into DNA. Through this antimutagenic activity protects cells from oxidative stress. In Homo sapiens (Human), this protein is Oxidized purine nucleoside triphosphate hydrolase (NUDT1).